The following is a 356-amino-acid chain: NADH-quinone oxidoreductase subunit H (356 aa).

8 helical membrane passes run 18-38 (IVMIAQSVLLLVVLLVAIAYI), 87-107 (GVFLLAPLVSCVLALAAWAVI), 120-140 (VGILFIFAISSLSIYGIIMAG), 166-186 (IGFVIITVLLCAGTLNLSAVV), 205-225 (ILNWYVWPLFPMFVVFYVSAL), 265-285 (AITTMCALATILFLGGWLPPI), 292-312 (WVPGVIWFALKLFFMFFLIAM), and 333-353 (FLPLSLVMVVIVAGVLHFAGI).

It belongs to the complex I subunit 1 family. In terms of assembly, NDH-1 is composed of 14 different subunits. Subunits NuoA, H, J, K, L, M, N constitute the membrane sector of the complex.

The protein localises to the cell inner membrane. The enzyme catalyses a quinone + NADH + 5 H(+)(in) = a quinol + NAD(+) + 4 H(+)(out). Functionally, NDH-1 shuttles electrons from NADH, via FMN and iron-sulfur (Fe-S) centers, to quinones in the respiratory chain. The immediate electron acceptor for the enzyme in this species is believed to be ubiquinone. Couples the redox reaction to proton translocation (for every two electrons transferred, four hydrogen ions are translocated across the cytoplasmic membrane), and thus conserves the redox energy in a proton gradient. This subunit may bind ubiquinone. The chain is NADH-quinone oxidoreductase subunit H from Bradyrhizobium sp. (strain BTAi1 / ATCC BAA-1182).